The primary structure comprises 241 residues: Urease accessory protein UreF (241 aa).

This sequence belongs to the UreF family. UreD, UreF and UreG form a complex that acts as a GTP-hydrolysis-dependent molecular chaperone, activating the urease apoprotein by helping to assemble the nickel containing metallocenter of UreC. The UreE protein probably delivers the nickel.

The protein resides in the cytoplasm. Required for maturation of urease via the functional incorporation of the urease nickel metallocenter. In Rhodopseudomonas palustris (strain BisB18), this protein is Urease accessory protein UreF.